The primary structure comprises 178 residues: MVHPWHDISPGDQNPEIVNGVIEIKRGSRAKYEVDKEYGILKLDRVLYSSFYYPANYGFIPQSYCGDQDPLDILVLSQVELEPLCLVKAKVIGVMRMLDSGEEDDKIIAVAANDMSVNHINDISELPPHFTLELKHFFEDYKKLENKTVVIEEFQNAILARKIVLDSLELYKKTFPKK.

The substrate site is built by Lys31, Arg45, and Tyr57. Residues Asp67, Asp72, and Asp104 each contribute to the Mg(2+) site. Tyr141 contributes to the substrate binding site.

Belongs to the PPase family. As to quaternary structure, homohexamer. Mg(2+) is required as a cofactor.

The protein localises to the cytoplasm. It carries out the reaction diphosphate + H2O = 2 phosphate + H(+). Its function is as follows. Catalyzes the hydrolysis of inorganic pyrophosphate (PPi) forming two phosphate ions. This Leptospira interrogans serogroup Icterohaemorrhagiae serovar copenhageni (strain Fiocruz L1-130) protein is Inorganic pyrophosphatase.